We begin with the raw amino-acid sequence, 287 residues long: uncharacterized protein (287 aa).

The 107-residue stretch at 133 to 239 (CEVGKTKKMT…KNIIGISIVQ (107 aa)) folds into the THUMP domain. The tract at residues 257 to 287 (ENTKSIPNDSKLDNFDRDKNQIINDKAEHAE) is disordered. A compositionally biased stretch (basic and acidic residues) spans 266-287 (SKLDNFDRDKNQIINDKAEHAE).

This is an uncharacterized protein from Schizosaccharomyces pombe (strain 972 / ATCC 24843) (Fission yeast).